The following is a 209-amino-acid chain: Pyroglutamyl-peptidase 1 (209 aa).

Catalysis depends on residues Glu-85, Cys-149, and His-168.

Belongs to the peptidase C15 family. In terms of assembly, monomer.

The protein resides in the cytoplasm. The catalysed reaction is Release of an N-terminal pyroglutamyl group from a polypeptide, the second amino acid generally not being Pro.. In terms of biological role, removes 5-oxoproline from various penultimate amino acid residues except L-proline. This Rattus norvegicus (Rat) protein is Pyroglutamyl-peptidase 1 (Pgpep1).